The chain runs to 139 residues: Large-conductance mechanosensitive channel (139 aa).

2 helical membrane-spanning segments follow: residues 14–34 and 81–101; these read VIDLAVGVIVGAAFTAIINSL and GSFLTAVINFLLIAFVVFMIV.

It belongs to the MscL family. Homopentamer.

Its subcellular location is the cell membrane. Channel that opens in response to stretch forces in the membrane lipid bilayer. May participate in the regulation of osmotic pressure changes within the cell. This chain is Large-conductance mechanosensitive channel, found in Chloroflexus aurantiacus (strain ATCC 29366 / DSM 635 / J-10-fl).